The chain runs to 129 residues: Transcriptional activator protein (129 aa).

The short motif at 13-28 (KAQHKIAKRRAVRRRR) is the Nuclear localization signal element. A zinc finger lies at 33–50 (CGCSIFLHINCADNGFTH). Residues 73–109 (IFQDTTRRGPVVHQNQDLPHPSPVQPQPTESIGSPQS) are disordered. Ser-109 is subject to Phosphoserine; by host. The interval 115–129 (SLDDFDESFWADIFK) is transactivation.

The protein belongs to the geminiviridae transcriptional activator protein family. Monomer. Homodimer. Homooligomer. Self-interaction correlates with nuclear localization and efficient activation of transcription. Monomers suppress local silencing by interacting with and inactivating host adenosine kinase 2 (ADK2) in the cytoplasm. Interacts with and inhibits host SNF1 kinase. Binds to ssDNA. In terms of processing, phosphorylated at Ser-109 by A.thaliana KIN10.

Its subcellular location is the host nucleus. It is found in the host cytoplasm. Its function is as follows. Strong activator of the late viral genes promoters. Enhances the expression of the capsid protein and nuclear shuttle protein. Acts as a suppressor of RNA-mediated gene silencing, also known as post-transcriptional gene silencing (PTGS), a mechanism of plant viral defense that limits the accumulation of viral RNAs. Suppresses the host RNA silencing by inhibiting adenosine kinase 2 (ADK2), a kinase involved in a general methylation pathway. Also suppresses the host basal defense by interacting with and inhibiting SNF1 kinase, a key regulator of cell metabolism implicated in innate antiviral defense. Determines pathogenicity. This Cabbage leaf curl virus (isolate Jamaica) (CaLCuV) protein is Transcriptional activator protein.